The following is a 346-amino-acid chain: Uroporphyrinogen decarboxylase (346 aa).

Residues 26–30 (RQAGR), phenylalanine 45, aspartate 76, tyrosine 153, serine 208, and histidine 323 contribute to the substrate site.

This sequence belongs to the uroporphyrinogen decarboxylase family. In terms of assembly, homodimer.

The protein localises to the cytoplasm. The enzyme catalyses uroporphyrinogen III + 4 H(+) = coproporphyrinogen III + 4 CO2. Its pathway is porphyrin-containing compound metabolism; protoporphyrin-IX biosynthesis; coproporphyrinogen-III from 5-aminolevulinate: step 4/4. Catalyzes the decarboxylation of four acetate groups of uroporphyrinogen-III to yield coproporphyrinogen-III. The sequence is that of Uroporphyrinogen decarboxylase from Prochlorococcus marinus subsp. pastoris (strain CCMP1986 / NIES-2087 / MED4).